A 128-amino-acid polypeptide reads, in one-letter code: MDAVTVYHGKISRETGEKLLLATGLDGSYLLRDSESVPGVYCLCVLYQGYIYTYRVSHTETGSWIADTAPGVHKRFFRKIKNLISAFQKPDQGIVIPLQYPVEKKSSARSTQGATGRREDPDVFLKTP.

Residues 6–102 (VYHGKISRET…GIVIPLQYPV (97 aa)) form the SH2 domain. Residues 67-92 (DTAPGVHKRFFRKIKNLISAFQKPDQ) form an interaction with FYN SH3 domain region. An N6-acetyllysine modification is found at K89. The disordered stretch occupies residues 103-128 (EKKSSARSTQGATGRREDPDVFLKTP). Basic and acidic residues predominate over residues 116–128 (GRREDPDVFLKTP).

As to quaternary structure, interacts with CD84, CD244, LY9, SLAMF1 and FYN. Interacts with NTRK1, NTRK2 and NTRK3.

Its subcellular location is the cytoplasm. Functionally, cytoplasmic adapter regulating receptors of the signaling lymphocytic activation molecule (SLAM) family such as SLAMF1, CD244, LY9, CD84, SLAMF6 and SLAMF7. In SLAM signaling seems to cooperate with SH2D1B/EAT-2. Initially it has been proposed that association with SLAMF1 prevents SLAMF1 binding to inhibitory effectors including INPP5D/SHIP1 and PTPN11/SHP-2. However, by simultaneous interactions, recruits FYN which subsequently phosphorylates and activates SLAMF1. Positively regulates CD244/2B4- and CD84-mediated natural killer (NK) cell functions. Can also promote CD48-, SLAMF6 -, LY9-, and SLAMF7-mediated NK cell activation. In the context of NK cell-mediated cytotoxicity enhances conjugate formation with target cells. May also regulate the activity of the neurotrophin receptors NTRK1, NTRK2 and NTRK3. The chain is SH2 domain-containing protein 1A (SH2D1A) from Sus scrofa (Pig).